We begin with the raw amino-acid sequence, 148 residues long: Caltractin (148 aa).

4 EF-hand domains span residues 4–39, 40–75, 77–112, and 113–148; these read EQKQ…LGFE, PKKE…KMGE, DSRE…LGEN, and MTDE…TSLF. Ca(2+) is bound by residues aspartate 17, aspartate 19, serine 21, threonine 23, glutamate 28, aspartate 53, aspartate 55, serine 57, threonine 59, and glutamate 64. 5 residues coordinate Ca(2+): aspartate 126, aspartate 128, aspartate 130, glutamate 132, and glutamate 137.

Belongs to the centrin family. As to expression, ubiquitous.

This calcium-binding protein is found in the basal body complexes (the functional homolog of the centrosome in animal cell). In mitotic cells it is specifically associated with the poles of the mitotic spindles at the sites of the duplicated basal body complexes. The polypeptide is Caltractin (Tetraselmis striata (Green microalga)).